A 262-amino-acid polypeptide reads, in one-letter code: Zinc-finger homeodomain protein 6 (262 aa).

Composition is skewed to basic and acidic residues over residues methionine 1–arginine 25 and asparagine 36–serine 47. Positions methionine 1–serine 93 are disordered. The segment at tyrosine 82–glutamate 131 adopts a ZF-HD dimerization-type; degenerate zinc-finger fold. Residues lysine 198–aspartate 261 constitute a DNA-binding region (homeobox).

Homo- and heterodimer with other ZFHD proteins. Interacts with MIF1 and MIF3; these interactions prevent nuclear localization and DNA-binding to inhibit transcription regulation activity. Binds to ZHD1, ZHD2, ZHD10 and ZHD11. As to expression, expressed in seedlings, roots, leaves, stems, flowers and inflorescence.

Its subcellular location is the nucleus. Functionally, putative transcription factor. The chain is Zinc-finger homeodomain protein 6 (ZHD6) from Arabidopsis thaliana (Mouse-ear cress).